Consider the following 224-residue polypeptide: tRNA (guanine-N(7)-)-methyltransferase (224 aa).

The S-adenosyl-L-methionine site is built by Glu54, Glu79, Asp106, and Asp129. Asp129 is an active-site residue. Substrate contacts are provided by Lys133 and Asp165.

The protein belongs to the class I-like SAM-binding methyltransferase superfamily. TrmB family.

The enzyme catalyses guanosine(46) in tRNA + S-adenosyl-L-methionine = N(7)-methylguanosine(46) in tRNA + S-adenosyl-L-homocysteine. The protein operates within tRNA modification; N(7)-methylguanine-tRNA biosynthesis. Catalyzes the formation of N(7)-methylguanine at position 46 (m7G46) in tRNA. This chain is tRNA (guanine-N(7)-)-methyltransferase, found in Chlamydia felis (strain Fe/C-56) (Chlamydophila felis).